A 306-amino-acid chain; its full sequence is Aspartate carbamoyltransferase catalytic subunit (306 aa).

Arg-53 and Thr-54 together coordinate carbamoyl phosphate. Lys-82 contributes to the L-aspartate binding site. Carbamoyl phosphate-binding residues include Arg-103, His-131, and Gln-134. 2 residues coordinate L-aspartate: Arg-164 and Arg-226. The carbamoyl phosphate site is built by Leu-263 and Pro-264.

Belongs to the aspartate/ornithine carbamoyltransferase superfamily. ATCase family. Heterododecamer (2C3:3R2) of six catalytic PyrB chains organized as two trimers (C3), and six regulatory PyrI chains organized as three dimers (R2).

It carries out the reaction carbamoyl phosphate + L-aspartate = N-carbamoyl-L-aspartate + phosphate + H(+). The protein operates within pyrimidine metabolism; UMP biosynthesis via de novo pathway; (S)-dihydroorotate from bicarbonate: step 2/3. Catalyzes the condensation of carbamoyl phosphate and aspartate to form carbamoyl aspartate and inorganic phosphate, the committed step in the de novo pyrimidine nucleotide biosynthesis pathway. This Methanocaldococcus jannaschii (strain ATCC 43067 / DSM 2661 / JAL-1 / JCM 10045 / NBRC 100440) (Methanococcus jannaschii) protein is Aspartate carbamoyltransferase catalytic subunit.